The following is a 516-amino-acid chain: 2-isopropylmalate synthase (516 aa).

The Pyruvate carboxyltransferase domain maps to Leu-5–Val-268. Mn(2+)-binding residues include Asp-14, His-202, His-204, and Asn-239. The regulatory domain stretch occupies residues Lys-395–Ile-516.

It belongs to the alpha-IPM synthase/homocitrate synthase family. LeuA type 1 subfamily. In terms of assembly, homodimer. Mn(2+) is required as a cofactor.

The protein resides in the cytoplasm. It catalyses the reaction 3-methyl-2-oxobutanoate + acetyl-CoA + H2O = (2S)-2-isopropylmalate + CoA + H(+). It functions in the pathway amino-acid biosynthesis; L-leucine biosynthesis; L-leucine from 3-methyl-2-oxobutanoate: step 1/4. Catalyzes the condensation of the acetyl group of acetyl-CoA with 3-methyl-2-oxobutanoate (2-ketoisovalerate) to form 3-carboxy-3-hydroxy-4-methylpentanoate (2-isopropylmalate). The polypeptide is 2-isopropylmalate synthase (Paraburkholderia phymatum (strain DSM 17167 / CIP 108236 / LMG 21445 / STM815) (Burkholderia phymatum)).